Here is a 256-residue protein sequence, read N- to C-terminus: Mannose-specific lectin 1 (256 aa).

The signal sequence occupies residues 1–23 (MAKLLLFLLPAILGLLVPRSAVA). Bulb-type lectin domains follow at residues 26 to 131 (TNYL…PWVR) and 145 to 252 (NNLL…SKRS). Beta-D-mannose-binding positions include 51 to 55 (QDDCN), tyrosine 59, tryptophan 63, glutamine 64, 170 to 174 (QGDCN), tyrosine 178, and 182 to 185 (YGWQ). The Carbohydrate-binding motif 1 motif lies at 51 to 59 (QDDCNLVLY). Cystine bridges form between cysteine 54-cysteine 74 and cysteine 173-cysteine 195. A Carbohydrate-binding motif 2 motif is present at residues 170–178 (QGDCNLVLY).

Forms heterodimers.

The protein resides in the secreted. Mannose-specific lectin. Shows agglutinating activity towards erythrocytes from rabbit. The chain is Mannose-specific lectin 1 from Remusatia vivipara (Hitchhiker elephant ear).